The chain runs to 292 residues: Release factor glutamine methyltransferase (292 aa).

Residues glycine 126 to glycine 130, aspartate 157, tryptophan 184, and asparagine 198 contribute to the S-adenosyl-L-methionine site. Position 198–201 (asparagine 198–tyrosine 201) interacts with substrate.

Belongs to the protein N5-glutamine methyltransferase family. PrmC subfamily.

The enzyme catalyses L-glutaminyl-[peptide chain release factor] + S-adenosyl-L-methionine = N(5)-methyl-L-glutaminyl-[peptide chain release factor] + S-adenosyl-L-homocysteine + H(+). Methylates the class 1 translation termination release factors RF1/PrfA and RF2/PrfB on the glutamine residue of the universally conserved GGQ motif. This Haemophilus influenzae (strain ATCC 51907 / DSM 11121 / KW20 / Rd) protein is Release factor glutamine methyltransferase.